The chain runs to 363 residues: Putative RAD2-like endonuclease 095R (363 aa).

The protein belongs to the XPG/RAD2 endonuclease family. It depends on Mg(2+) as a cofactor.

Its subcellular location is the host nucleus. Its function is as follows. Probable endonuclease. The protein is Putative RAD2-like endonuclease 095R of Frog virus 3 (isolate Goorha) (FV-3).